A 469-amino-acid chain; its full sequence is Solute carrier family 52, riboflavin transporter, member 3 (469 aa).

The Cytoplasmic segment spans residues 1 to 6 (MALLTH). The helical transmembrane segment at 7–27 (LLVCTFGMGSWVAINGLWVEL) threads the bilayer. Residues 28–43 (PLLVTELPEGWYLPSY) lie on the Extracellular side of the membrane. A helical membrane pass occupies residues 44-64 (LTMVIQLANIGPLLVTLLHHF). The Cytoplasmic portion of the chain corresponds to 65–71 (QPSCLSE). The helical transmembrane segment at 72-92 (VPIIFTVLAVGTVACALFAFL) threads the bilayer. Topologically, residues 93–105 (WNVTSWVLDGRHS) are extracellular. The N-linked (GlcNAc...) asparagine glycan is linked to N94. The helical transmembrane segment at 106 to 126 (IAFMVLTFFLALVDCTSSVTF) threads the bilayer. The Cytoplasmic portion of the chain corresponds to 127–137 (LPFMSRLPACY). A helical transmembrane segment spans residues 138-158 (LTTFFVGEGLSSLLPALVALA). Topologically, residues 159–220 (QGSGLTTCVN…SRYLPANFSP (62 aa)) are extracellular. N-linked (GlcNAc...) asparagine glycosylation occurs at N168. The chain crosses the membrane as a helical span at residues 221-241 (LVFFLLLSFMMACCLAAFFLL). Topologically, residues 242–297 (QRQPRPRESSIEDLLTSQVTLHSIRPREGDDLGPPDPGPSSKAQGLPEEKTASDHP) are cytoplasmic. Position 251 is a phosphoserine (S251). The interval 266 to 290 (RPREGDDLGPPDPGPSSKAQGLPEE) is disordered. Residues 298 to 318 (AHLAFIYVLVAFVNALTNGVL) form a helical membrane-spanning segment. Topologically, residues 319–335 (PSVQTYSCLSYGPVAYH) are extracellular. Residues 336-356 (LSATLSSMANPLACFLSMFLP) traverse the membrane as a helical segment. Over 357–361 (HRSLP) the chain is Cytoplasmic. The helical transmembrane segment at 362-382 (FLGVLTVLGTGFGAYNMAMAV) threads the bilayer. Residues 383-396 (MSPCPLMQGHWAGE) lie on the Extracellular side of the membrane. Residues 397–417 (ILIVASWVLFIGCLSYVKVML) traverse the membrane as a helical segment. At 418–427 (GVILRDRSRS) the chain is on the cytoplasmic side. A helical membrane pass occupies residues 428–448 (ALVWCGAAVQLGSLLGALLMF). Topologically, residues 449-469 (PLVNVLRLFSSADFCSLQCSA) are extracellular.

The protein belongs to the riboflavin transporter family.

It is found in the cell membrane. It catalyses the reaction riboflavin(in) = riboflavin(out). Functionally, plasma membrane transporter mediating the uptake by cells of the water soluble vitamin B2/riboflavin that plays a key role in biochemical oxidation-reduction reactions of the carbohydrate, lipid, and amino acid metabolism. The polypeptide is Solute carrier family 52, riboflavin transporter, member 3 (SLC52A3) (Ailuropoda melanoleuca (Giant panda)).